The chain runs to 372 residues: tRNA-specific 2-thiouridylase MnmA (372 aa).

ATP-binding positions include 11-18 (GMSGGVDS) and Met-37. The interval 97 to 99 (NPD) is interaction with target base in tRNA. The Nucleophile role is filled by Cys-102. Cys-102 and Cys-199 are disulfide-bonded. Gly-126 lines the ATP pocket. The segment at 149–151 (KDQ) is interaction with tRNA. The active-site Cysteine persulfide intermediate is Cys-199. The interval 309–310 (RY) is interaction with tRNA.

Belongs to the MnmA/TRMU family.

It localises to the cytoplasm. The catalysed reaction is S-sulfanyl-L-cysteinyl-[protein] + uridine(34) in tRNA + AH2 + ATP = 2-thiouridine(34) in tRNA + L-cysteinyl-[protein] + A + AMP + diphosphate + H(+). Its function is as follows. Catalyzes the 2-thiolation of uridine at the wobble position (U34) of tRNA, leading to the formation of s(2)U34. The sequence is that of tRNA-specific 2-thiouridylase MnmA from Staphylococcus aureus (strain Mu50 / ATCC 700699).